A 200-amino-acid chain; its full sequence is Probable nicotinate-nucleotide adenylyltransferase (200 aa).

The protein belongs to the NadD family.

The catalysed reaction is nicotinate beta-D-ribonucleotide + ATP + H(+) = deamido-NAD(+) + diphosphate. The protein operates within cofactor biosynthesis; NAD(+) biosynthesis; deamido-NAD(+) from nicotinate D-ribonucleotide: step 1/1. Catalyzes the reversible adenylation of nicotinate mononucleotide (NaMN) to nicotinic acid adenine dinucleotide (NaAD). In Clavibacter michiganensis subsp. michiganensis (strain NCPPB 382), this protein is Probable nicotinate-nucleotide adenylyltransferase.